We begin with the raw amino-acid sequence, 929 residues long: Alanine--tRNA ligase (929 aa).

4 residues coordinate Zn(2+): H619, H623, C722, and H726.

This sequence belongs to the class-II aminoacyl-tRNA synthetase family. Requires Zn(2+) as cofactor.

The protein resides in the cytoplasm. The enzyme catalyses tRNA(Ala) + L-alanine + ATP = L-alanyl-tRNA(Ala) + AMP + diphosphate. Catalyzes the attachment of alanine to tRNA(Ala) in a two-step reaction: alanine is first activated by ATP to form Ala-AMP and then transferred to the acceptor end of tRNA(Ala). Also edits incorrectly charged Ser-tRNA(Ala) and Gly-tRNA(Ala) via its editing domain. This is Alanine--tRNA ligase from Halobacterium salinarum (strain ATCC 29341 / DSM 671 / R1).